The primary structure comprises 287 residues: Small ribosomal subunit biogenesis GTPase RsgA (287 aa).

One can recognise a CP-type G domain in the interval 61 to 218 (SSELIRPTVA…LVDTPGFTTL (158 aa)). Residues 110–113 (NKED) and 161–169 (GPSGAGKST) each bind GTP. Zn(2+)-binding residues include cysteine 242, cysteine 247, histidine 249, and cysteine 255.

This sequence belongs to the TRAFAC class YlqF/YawG GTPase family. RsgA subfamily. In terms of assembly, monomer. Associates with 30S ribosomal subunit, binds 16S rRNA. It depends on Zn(2+) as a cofactor.

It localises to the cytoplasm. Its function is as follows. One of several proteins that assist in the late maturation steps of the functional core of the 30S ribosomal subunit. Helps release RbfA from mature subunits. May play a role in the assembly of ribosomal proteins into the subunit. Circularly permuted GTPase that catalyzes slow GTP hydrolysis, GTPase activity is stimulated by the 30S ribosomal subunit. The polypeptide is Small ribosomal subunit biogenesis GTPase RsgA (Clostridium perfringens (strain 13 / Type A)).